Here is a 487-residue protein sequence, read N- to C-terminus: Malonate-semialdehyde dehydrogenase 2 (487 aa).

Residues phenylalanine 154, lysine 178, glutamate 181, arginine 182, and serine 231 each contribute to the NAD(+) site. The active-site Nucleophile is the cysteine 286. Residue glutamate 386 participates in NAD(+) binding.

Belongs to the aldehyde dehydrogenase family. IolA subfamily. In terms of assembly, homotetramer.

The catalysed reaction is 3-oxopropanoate + NAD(+) + CoA + H2O = hydrogencarbonate + acetyl-CoA + NADH + H(+). It carries out the reaction 2-methyl-3-oxopropanoate + NAD(+) + CoA + H2O = propanoyl-CoA + hydrogencarbonate + NADH + H(+). The protein operates within polyol metabolism; myo-inositol degradation into acetyl-CoA; acetyl-CoA from myo-inositol: step 7/7. Catalyzes the oxidation of malonate semialdehyde (MSA) and methylmalonate semialdehyde (MMSA) into acetyl-CoA and propanoyl-CoA, respectively. Is involved in a myo-inositol catabolic pathway. Bicarbonate, and not CO2, is the end-product of the enzymatic reaction. The polypeptide is Malonate-semialdehyde dehydrogenase 2 (Bacillus anthracis).